Here is a 325-residue protein sequence, read N- to C-terminus: Replication factor C small subunit (325 aa).

Residue G54–T61 coordinates ATP.

The protein belongs to the activator 1 small subunits family. RfcS subfamily. As to quaternary structure, heteromultimer composed of small subunits (RfcS) and large subunits (RfcL).

Part of the RFC clamp loader complex which loads the PCNA sliding clamp onto DNA. This chain is Replication factor C small subunit, found in Haloarcula marismortui (strain ATCC 43049 / DSM 3752 / JCM 8966 / VKM B-1809) (Halobacterium marismortui).